Consider the following 381-residue polypeptide: Translation initiation factor eIF2B subunit beta (381 aa).

Positions 125-148 are disordered; the sequence is LQKPEQPHQNRKNSSGSSSMKTKT. The span at 136–145 shows a compositional bias: polar residues; sequence KNSSGSSSMK.

It belongs to the eIF-2B alpha/beta/delta subunits family. As to quaternary structure, component of the translation initiation factor 2B (eIF2B) complex which is a heterodecamer of two sets of five different subunits: alpha, beta, gamma, delta and epsilon. Subunits alpha, beta and delta comprise a regulatory subcomplex and subunits epsilon and gamma comprise a catalytic subcomplex. Within the complex, the hexameric regulatory complex resides at the center, with the two heterodimeric catalytic subcomplexes bound on opposite sides.

It is found in the cytoplasm. Its subcellular location is the cytosol. In terms of biological role, acts as a component of the translation initiation factor 2B (eIF2B) complex, which catalyzes the exchange of GDP for GTP on the eukaryotic initiation factor 2 (eIF2) complex gamma subunit. Its guanine nucleotide exchange factor activity is repressed when bound to eIF2 complex phosphorylated on the alpha subunit, thereby limiting the amount of methionyl-initiator methionine tRNA available to the ribosome and consequently global translation is repressed. It activates the synthesis of GCN4 in yeast under amino acid starvation conditions by suppressing the inhibitory effects of multiple AUG codons present in the leader of GCN4 mRNA. It may promote either repression or activation of GCN4 expression depending on amino acid availability. GCD6 and GCD7 repress GCN4 expression at the translational level by ensuring that ribosomes which have translated UORF1 will reinitiate at UORF2, -3, or -4 and thus fail to reach the GCN4 start site. In Saccharomyces cerevisiae (strain ATCC 204508 / S288c) (Baker's yeast), this protein is Translation initiation factor eIF2B subunit beta (GCD7).